A 351-amino-acid polypeptide reads, in one-letter code: Histidinol-phosphate aminotransferase (351 aa).

Position 213 is an N6-(pyridoxal phosphate)lysine (Lys-213).

This sequence belongs to the class-II pyridoxal-phosphate-dependent aminotransferase family. Histidinol-phosphate aminotransferase subfamily. As to quaternary structure, homodimer. The cofactor is pyridoxal 5'-phosphate.

It catalyses the reaction L-histidinol phosphate + 2-oxoglutarate = 3-(imidazol-4-yl)-2-oxopropyl phosphate + L-glutamate. It functions in the pathway amino-acid biosynthesis; L-histidine biosynthesis; L-histidine from 5-phospho-alpha-D-ribose 1-diphosphate: step 7/9. The protein is Histidinol-phosphate aminotransferase of Clostridium kluyveri (strain NBRC 12016).